A 451-amino-acid chain; its full sequence is Gamma-aminobutyric acid receptor subunit alpha-2 (451 aa).

An N-terminal signal peptide occupies residues 1 to 28 (MKTKLNIYNMQFLLFVFLVWDPARLVLA). At 29 to 249 (NIQEDEAKNN…MTAHFHLKRK (221 aa)) the chain is on the extracellular side. N-linked (GlcNAc...) asparagine glycosylation is present at Asn38. Arg94 contacts 4-aminobutanoate. Asn138 carries N-linked (GlcNAc...) asparagine glycosylation. Thr157 provides a ligand contact to 4-aminobutanoate. A disulfide bond links Cys166 and Cys180. A helical membrane pass occupies residues 250–270 (IGYFVIQTYLPCIMTVILSQV). The Cytoplasmic segment spans residues 271–280 (SFWLNRESVP). Residues 281-300 (ARTVFGVTTVLTMTTLSISA) traverse the membrane as a helical segment. The Extracellular segment spans residues 301–311 (RNSLPKVAYAT). Residues 312–332 (AMDWFIAVCYAFVFSALIEFA) traverse the membrane as a helical segment. At 333 to 420 (TVNYFTKRGW…FNSVSKIDRM (88 aa)) the chain is on the cytoplasmic side. A helical transmembrane segment spans residues 421–441 (SRIVFPVLFGTFNLVYWATYL). The Extracellular portion of the chain corresponds to 442 to 451 (NREPVLGVSP).

This sequence belongs to the ligand-gated ion channel (TC 1.A.9) family. Gamma-aminobutyric acid receptor (TC 1.A.9.5) subfamily. GABRA2 sub-subfamily. In terms of assembly, heteropentamer, formed by a combination of alpha (GABRA1-6), beta (GABRB1-3), gamma (GABRG1-3), delta (GABRD), epsilon (GABRE), rho (GABRR1-3), pi (GABRP) and theta (GABRQ) subunits, each subunit exhibiting distinct physiological and pharmacological properties. Interacts with UBQLN1. Interacts with KIF21B. Interacts with LHFPL4. Interacts with SHISA7; interaction leads to the regulation of GABA(A) receptor trafficking, channel deactivation kinetics and pharmacology. In terms of processing, glycosylated.

The protein resides in the postsynaptic cell membrane. Its subcellular location is the cell membrane. The protein localises to the cytoplasmic vesicle membrane. It localises to the cell projection. It is found in the dendrite. It carries out the reaction chloride(in) = chloride(out). With respect to regulation, activated by pentobarbital. Inhibited by the antagonist bicuculline. Alpha subunit of the heteropentameric ligand-gated chloride channel gated by gamma-aminobutyric acid (GABA), a major inhibitory neurotransmitter in the brain. GABA-gated chloride channels, also named GABA(A) receptors (GABAAR), consist of five subunits arranged around a central pore and contain GABA active binding site(s) located at the alpha and beta subunit interfaces. When activated by GABA, GABAARs selectively allow the flow of chloride anions across the cell membrane down their electrochemical gradient. Chloride influx into the postsynaptic neuron following GABAAR opening decreases the neuron ability to generate a new action potential, thereby reducing nerve transmission. The alpha-2 subunit exhibits synaptogenic activity together with beta-2 and very little to no activity together with beta-3, the gamma-2 subunit being necessary but not sufficient to induce rapid synaptic contacts formation. This chain is Gamma-aminobutyric acid receptor subunit alpha-2, found in Homo sapiens (Human).